A 148-amino-acid polypeptide reads, in one-letter code: MGRFISVSFGLLVVFLSLSGAGAGFCCPLGWSSYDLYCYKVFKQEMNWTDAEKFCTEQHTGSHLVSFHSSEEADFVVNMTYPILKLDFVWIGLSNVWNQCNSEWSDGTKLNYKDWSGESECIASKTIENQWWSRSCSRTHYVVCKFQA.

Positions 1-23 are cleaved as a signal peptide; that stretch reads MGRFISVSFGLLVVFLSLSGAGA. The cysteines at positions 27 and 38 are disulfide-linked. In terms of domain architecture, C-type lectin spans 34–145; it reads YDLYCYKVFK…CSRTHYVVCK (112 aa). Asn47 and Asn78 each carry an N-linked (GlcNAc...) asparagine glycan. 2 disulfide bridges follow: Cys55-Cys144 and Cys121-Cys136.

It belongs to the snaclec family. As to quaternary structure, heteromultimer; disulfide-linked. In terms of tissue distribution, expressed by the venom gland.

The protein localises to the secreted. In terms of biological role, interferes with one step of hemostasis (modulation of platelet aggregation, or coagulation cascade, for example). This chain is Snaclec stejaggregin-A subunit beta-3, found in Trimeresurus stejnegeri (Chinese green tree viper).